We begin with the raw amino-acid sequence, 390 residues long: Precorrin-6Y C(5,15)-methyltransferase [decarboxylating] (390 aa).

The protein belongs to the precorrin methyltransferase family.

It catalyses the reaction precorrin-6B + 2 S-adenosyl-L-methionine = precorrin-8X + 2 S-adenosyl-L-homocysteine + CO2 + 3 H(+). Its pathway is cofactor biosynthesis; adenosylcobalamin biosynthesis; cob(II)yrinate a,c-diamide from precorrin-2 (aerobic route): step 7/10. Functionally, catalyzes the methylation of both C-5 and C-15 in precorrin-6Y to form precorrin-8X. This Mycobacterium tuberculosis (strain CDC 1551 / Oshkosh) protein is Precorrin-6Y C(5,15)-methyltransferase [decarboxylating] (cobL).